The following is a 570-amino-acid chain: Urease subunit alpha (570 aa).

Positions 132–570 constitute a Urease domain; sequence GGIDTHVHFI…LPMAQRYFLF (439 aa). Ni(2+) is bound by residues His-137 and His-139. Substrate is bound by residues His-139 and Ala-170. A Ni(2+)-binding site is contributed by Lys-220. N6-carboxylysine is present on Lys-220. His-222 and His-249 together coordinate substrate. Ni(2+) contacts are provided by His-249 and His-275. His-323 (proton donor) is an active-site residue. Residue Asp-363 coordinates Ni(2+). Position 366 (Ala-366) interacts with substrate.

Belongs to the metallo-dependent hydrolases superfamily. Urease alpha subunit family. In terms of assembly, heterotrimer of UreA (gamma), UreB (beta) and UreC (alpha) subunits. Three heterotrimers associate to form the active enzyme. Ni cation serves as cofactor. Post-translationally, carboxylation allows a single lysine to coordinate two nickel ions.

It localises to the cytoplasm. It carries out the reaction urea + 2 H2O + H(+) = hydrogencarbonate + 2 NH4(+). It participates in nitrogen metabolism; urea degradation; CO(2) and NH(3) from urea (urease route): step 1/1. Inhibited by fluoride. The protein is Urease subunit alpha of Sporosarcina pasteurii (Bacillus pasteurii).